Reading from the N-terminus, the 380-residue chain is Cytochrome b (380 aa).

Helical transmembrane passes span 33–53, 77–98, 113–133, and 178–198; these read FGSL…FLAM, WFIR…YIHV, WNVG…GYVL, and FFAF…VHLL. Residues histidine 83 and histidine 97 each contribute to the heme b site. Heme b-binding residues include histidine 182 and histidine 196. Histidine 201 provides a ligand contact to a ubiquinone. Helical transmembrane passes span 226–246, 288–308, 320–340, and 347–367; these read TKDI…VLFA, LGGV…PYLY, LTQL…WIGA, and FITI…ILMP.

It belongs to the cytochrome b family. In terms of assembly, the cytochrome bc1 complex contains 11 subunits: 3 respiratory subunits (MT-CYB, CYC1 and UQCRFS1), 2 core proteins (UQCRC1 and UQCRC2) and 6 low-molecular weight proteins (UQCRH/QCR6, UQCRB/QCR7, UQCRQ/QCR8, UQCR10/QCR9, UQCR11/QCR10 and a cleavage product of UQCRFS1). This cytochrome bc1 complex then forms a dimer. It depends on heme b as a cofactor.

Its subcellular location is the mitochondrion inner membrane. In terms of biological role, component of the ubiquinol-cytochrome c reductase complex (complex III or cytochrome b-c1 complex) that is part of the mitochondrial respiratory chain. The b-c1 complex mediates electron transfer from ubiquinol to cytochrome c. Contributes to the generation of a proton gradient across the mitochondrial membrane that is then used for ATP synthesis. This chain is Cytochrome b (MT-CYB), found in Cricetomys emini (Emin's giant pouched rat).